We begin with the raw amino-acid sequence, 280 residues long: Energy-coupling factor transporter ATP-binding protein EcfA1 (280 aa).

The ABC transporter domain occupies 6–241 (LRTENISFQY…SHMLQEIGLD (236 aa)). 40 to 47 (GQNGSGKS) contacts ATP.

It belongs to the ABC transporter superfamily. Energy-coupling factor EcfA family. In terms of assembly, forms a stable energy-coupling factor (ECF) transporter complex composed of 2 membrane-embedded substrate-binding proteins (S component), 2 ATP-binding proteins (A component) and 2 transmembrane proteins (T component).

It is found in the cell membrane. Its function is as follows. ATP-binding (A) component of a common energy-coupling factor (ECF) ABC-transporter complex. Unlike classic ABC transporters this ECF transporter provides the energy necessary to transport a number of different substrates. The polypeptide is Energy-coupling factor transporter ATP-binding protein EcfA1 (Bacillus thuringiensis subsp. konkukian (strain 97-27)).